The chain runs to 262 residues: Deaminated glutathione amidase (262 aa).

A CN hydrolase domain is found at 1-238; that stretch reads MLVAAGQFAV…PALIMAEVTP (238 aa). Glu-40 acts as the Proton acceptor in catalysis. The active-site Proton donor is Lys-110. The active-site Nucleophile is the Cys-147.

The protein belongs to the carbon-nitrogen hydrolase superfamily. NIT1/NIT2 family.

The catalysed reaction is N-(4-oxoglutaryl)-L-cysteinylglycine + H2O = L-cysteinylglycine + 2-oxoglutarate. Hydrolyzes deaminated glutathione (dGSH) to 2-oxoglutarate and L-cysteinylglycine, and no activity on glutathione or L-glutamine. May function as a metabolite repair enzyme. The chain is Deaminated glutathione amidase (ybeM) from Escherichia coli O157:H7.